The sequence spans 311 residues: Probable manganese-dependent inorganic pyrophosphatase (311 aa).

6 residues coordinate Mn(2+): His-9, Asp-13, Asp-15, Asp-75, His-97, and Asp-149.

This sequence belongs to the PPase class C family. The cofactor is Mn(2+).

The protein localises to the cytoplasm. It carries out the reaction diphosphate + H2O = 2 phosphate + H(+). This is Probable manganese-dependent inorganic pyrophosphatase from Lactobacillus gasseri (strain ATCC 33323 / DSM 20243 / BCRC 14619 / CIP 102991 / JCM 1131 / KCTC 3163 / NCIMB 11718 / NCTC 13722 / AM63).